We begin with the raw amino-acid sequence, 153 residues long: Histone H2B.3 (153 aa).

Basic and acidic residues-rich tracts occupy residues 1-28 (MAPKAEKKPAAKKPAEEEPAAEKAEKAL) and 36-53 (EKRLPAGKAEKGSGEGRK). Positions 1 to 61 (MAPKAEKKPA…RKAGRKKAKK (61 aa)) are disordered. Residues Lys7 and Lys37 each carry the N6-acetyllysine modification. Residue Lys149 forms a Glycyl lysine isopeptide (Lys-Gly) (interchain with G-Cter in ubiquitin) linkage.

It belongs to the histone H2B family. The nucleosome is a histone octamer containing two molecules each of H2A, H2B, H3 and H4 assembled in one H3-H4 heterotetramer and two H2A-H2B heterodimers. The octamer wraps approximately 147 bp of DNA. Can be acetylated to form H2BK6ac and H2BK33ac. Post-translationally, monoubiquitinated by BRE1 to form H2BK143ub1 and deubiquitinated by UBP26. Required for heterochromatic histone H3 di- and trimethylation at H3K4me. May give a specific tag for epigenetic transcriptional activation.

It is found in the nucleus. The protein resides in the chromosome. Its function is as follows. Core component of nucleosome. Nucleosomes wrap and compact DNA into chromatin, limiting DNA accessibility to the cellular machineries which require DNA as a template. Histones thereby play a central role in transcription regulation, DNA repair, DNA replication and chromosomal stability. DNA accessibility is regulated via a complex set of post-translational modifications of histones, also called histone code, and nucleosome remodeling. The chain is Histone H2B.3 (H2B.3) from Oryza sativa subsp. indica (Rice).